We begin with the raw amino-acid sequence, 482 residues long: Phenylalanine--tRNA ligase alpha subunit (482 aa).

L-phenylalanine is bound by residues Thr327, 366-368, and Tyr406; that span reads QIE. Glu408 lines the Mg(2+) pocket. Residue Phe430 participates in L-phenylalanine binding.

This sequence belongs to the class-II aminoacyl-tRNA synthetase family. Phe-tRNA synthetase alpha subunit type 2 subfamily. Tetramer of two alpha and two beta subunits. It depends on Mg(2+) as a cofactor.

The protein resides in the cytoplasm. It catalyses the reaction tRNA(Phe) + L-phenylalanine + ATP = L-phenylalanyl-tRNA(Phe) + AMP + diphosphate + H(+). The sequence is that of Phenylalanine--tRNA ligase alpha subunit from Thermoplasma volcanium (strain ATCC 51530 / DSM 4299 / JCM 9571 / NBRC 15438 / GSS1).